The sequence spans 342 residues: Ribosomal RNA small subunit methyltransferase C (342 aa).

It belongs to the methyltransferase superfamily. RsmC family. As to quaternary structure, monomer.

The protein resides in the cytoplasm. The catalysed reaction is guanosine(1207) in 16S rRNA + S-adenosyl-L-methionine = N(2)-methylguanosine(1207) in 16S rRNA + S-adenosyl-L-homocysteine + H(+). Functionally, specifically methylates the guanine in position 1207 of 16S rRNA in the 30S particle. The chain is Ribosomal RNA small subunit methyltransferase C from Shewanella sp. (strain MR-7).